A 243-amino-acid chain; its full sequence is 1-(5-phosphoribosyl)-5-[(5-phosphoribosylamino)methylideneamino] imidazole-4-carboxamide isomerase (243 aa).

Asp17 acts as the Proton acceptor in catalysis. Asp138 acts as the Proton donor in catalysis.

Belongs to the HisA/HisF family.

The protein resides in the cytoplasm. It catalyses the reaction 1-(5-phospho-beta-D-ribosyl)-5-[(5-phospho-beta-D-ribosylamino)methylideneamino]imidazole-4-carboxamide = 5-[(5-phospho-1-deoxy-D-ribulos-1-ylimino)methylamino]-1-(5-phospho-beta-D-ribosyl)imidazole-4-carboxamide. It functions in the pathway amino-acid biosynthesis; L-histidine biosynthesis; L-histidine from 5-phospho-alpha-D-ribose 1-diphosphate: step 4/9. In Deinococcus geothermalis (strain DSM 11300 / CIP 105573 / AG-3a), this protein is 1-(5-phosphoribosyl)-5-[(5-phosphoribosylamino)methylideneamino] imidazole-4-carboxamide isomerase.